We begin with the raw amino-acid sequence, 68 residues long: Large ribosomal subunit protein bL33c (68 aa).

This sequence belongs to the bacterial ribosomal protein bL33 family.

The protein localises to the plastid. The protein resides in the chloroplast. This is Large ribosomal subunit protein bL33c from Nymphaea alba (White water-lily).